The following is a 360-amino-acid chain: Mediator of RNA polymerase II transcription subunit 6 (360 aa).

Disordered regions lie at residues 186-238 (PAQP…NDPL) and 316-360 (AAAA…PGAA). Composition is skewed to low complexity over residues 190-205 (SAGA…YTAS) and 316-325 (AAAAAANANA).

This sequence belongs to the Mediator complex subunit 6 family. In terms of assembly, component of the Mediator complex.

The protein resides in the nucleus. In terms of biological role, component of the Mediator complex, a coactivator involved in the regulated transcription of nearly all RNA polymerase II-dependent genes. Mediator functions as a bridge to convey information from gene-specific regulatory proteins to the basal RNA polymerase II transcription machinery. Mediator is recruited to promoters by direct interactions with regulatory proteins and serves as a scaffold for the assembly of a functional preinitiation complex with RNA polymerase II and the general transcription factors. The polypeptide is Mediator of RNA polymerase II transcription subunit 6 (med-6) (Neurospora crassa (strain ATCC 24698 / 74-OR23-1A / CBS 708.71 / DSM 1257 / FGSC 987)).